We begin with the raw amino-acid sequence, 735 residues long: Cyclic nucleotide-gated channel cone photoreceptor subunit alpha (735 aa).

At 1–214 (MAKINTQHSY…PSSNMYYNWL (214 aa)) the chain is on the cytoplasmic side. The tract at residues 142-191 (VNFSNNTNEDKKEEKKEVKEEKKEEKKEEKKEEKKDDKKDDKKDDKKDDK) is disordered. Residues 149–191 (NEDKKEEKKEVKEEKKEEKKEEKKEEKKDDKKDDKKDDKKDDK) are compositionally biased toward basic and acidic residues. The chain crosses the membrane as a helical span at residues 215-236 (TIIAAPVFYNWCMLICRACFDE). Residues 237–246 (LQIDHIKLWL) are Extracellular-facing. The helical transmembrane segment at 247–267 (FLDYCSDIIYVFDMFVRFRTG) threads the bilayer. At 268 to 292 (FLEQGLLVKDEKKLRDHYTQTVQFK) the chain is on the cytoplasmic side. Residues 293 to 311 (LDVLSLLPTDLAYLKLGLN) traverse the membrane as a helical segment. Over 312 to 316 (YPELR) the chain is Extracellular. Residues 317-335 (FNRLLRIARLFEFFDRTET) traverse the membrane as a helical segment. Residues 336 to 342 (RTNYPNM) lie on the Cytoplasmic side of the membrane. The chain crosses the membrane as a helical span at residues 343-366 (FRIGNLVLYILIIIHWNACIYFAI). The Extracellular portion of the chain corresponds to 367 to 389 (SKVIGFGTDSWVYPNVSIPEYGR). A run of 2 helical transmembrane segments spans residues 390–424 (LSRK…LFVV) and 425–449 (IDFL…SNMN). Residues 450-735 (ASRAEFQAKV…PEKPEEQKKD (286 aa)) lie on the Cytoplasmic side of the membrane. 3',5'-cyclic GMP-binding positions include 532–654 (LLIE…DNLI), glutamate 591, and arginine 606. Residues 715–735 (GSGSLSVGEPEPEKPEEQKKD) are disordered. The segment covering 725–735 (EPEKPEEQKKD) has biased composition (basic and acidic residues).

This sequence belongs to the cyclic nucleotide-gated cation channel (TC 1.A.1.5) family.

The protein localises to the membrane. In terms of biological role, visual signal transduction is mediated by a G-protein coupled cascade using cGMP as second messenger. This protein can be activated by cyclic GMP which leads to an opening of the cation channel and thereby causing a depolarization of cone photoreceptors. The protein is Cyclic nucleotide-gated channel cone photoreceptor subunit alpha of Gallus gallus (Chicken).